We begin with the raw amino-acid sequence, 325 residues long: Ribose-phosphate pyrophosphokinase 2 (325 aa).

96–101 (RQDKKD) contributes to the ATP binding site. Mg(2+) contacts are provided by Asp135, His137, Asp146, and Asp150. His137 is a binding site for ATP. Residues 219–234 (KDRVAILVDDMADTCG) are binding of phosphoribosylpyrophosphate.

This sequence belongs to the ribose-phosphate pyrophosphokinase family. Homodimer. The active form is probably a hexamer composed of 3 homodimers. The cofactor is Mg(2+).

The catalysed reaction is D-ribose 5-phosphate + ATP = 5-phospho-alpha-D-ribose 1-diphosphate + AMP + H(+). It participates in metabolic intermediate biosynthesis; 5-phospho-alpha-D-ribose 1-diphosphate biosynthesis; 5-phospho-alpha-D-ribose 1-diphosphate from D-ribose 5-phosphate (route I): step 1/1. With respect to regulation, activated by magnesium and inorganic phosphate. Competitively or non-competitively inhibited by ADP, 2,3-bisphosphoglyceride or GDP. Its function is as follows. Catalyzes the synthesis of phosphoribosylpyrophosphate (PRPP) that is essential for nucleotide synthesis. The sequence is that of Ribose-phosphate pyrophosphokinase 2 (PRPS2) from Gallus gallus (Chicken).